The chain runs to 300 residues: Acetylglutamate kinase (300 aa).

Substrate is bound by residues 73-74 (GG), R95, and N197.

Belongs to the acetylglutamate kinase family. ArgB subfamily.

It localises to the cytoplasm. It carries out the reaction N-acetyl-L-glutamate + ATP = N-acetyl-L-glutamyl 5-phosphate + ADP. It functions in the pathway amino-acid biosynthesis; L-arginine biosynthesis; N(2)-acetyl-L-ornithine from L-glutamate: step 2/4. Catalyzes the ATP-dependent phosphorylation of N-acetyl-L-glutamate. In Polynucleobacter necessarius subsp. necessarius (strain STIR1), this protein is Acetylglutamate kinase.